The primary structure comprises 197 residues: MAERTACVERNTLETRIKVSVNLDGTGKTRFATGVPFFEHMLDQIARHGLIDLDIECQGDLHIDDHHTVEDVGITLGQAFARAIGDKKGIVRYGHSYVPLDEALSRVVVDFSGRPGLSMQVPYTRARVGSFDVDLFQEFFQGFVNHAQVTLHIDNLRGSNTHHQIETVFKAFGRALRMAVEPDPRMVGQTPSTKGCL.

This sequence belongs to the imidazoleglycerol-phosphate dehydratase family.

The protein resides in the cytoplasm. It carries out the reaction D-erythro-1-(imidazol-4-yl)glycerol 3-phosphate = 3-(imidazol-4-yl)-2-oxopropyl phosphate + H2O. Its pathway is amino-acid biosynthesis; L-histidine biosynthesis; L-histidine from 5-phospho-alpha-D-ribose 1-diphosphate: step 6/9. The chain is Imidazoleglycerol-phosphate dehydratase from Azotobacter vinelandii (strain DJ / ATCC BAA-1303).